A 391-amino-acid polypeptide reads, in one-letter code: Argininosuccinate synthase (391 aa).

6-14 (AYSGGLDTT) serves as a coordination point for ATP. Y84 contacts L-citrulline. G114 contacts ATP. 3 residues coordinate L-aspartate: T116, N120, and D121. N120 provides a ligand contact to L-citrulline. L-citrulline-binding residues include R124, S171, S180, E253, and Y265.

Belongs to the argininosuccinate synthase family. Type 1 subfamily. In terms of assembly, homotetramer.

It is found in the cytoplasm. The catalysed reaction is L-citrulline + L-aspartate + ATP = 2-(N(omega)-L-arginino)succinate + AMP + diphosphate + H(+). Its pathway is amino-acid biosynthesis; L-arginine biosynthesis; L-arginine from L-ornithine and carbamoyl phosphate: step 2/3. This chain is Argininosuccinate synthase, found in Saccharolobus solfataricus (strain ATCC 35092 / DSM 1617 / JCM 11322 / P2) (Sulfolobus solfataricus).